The primary structure comprises 498 residues: Glutamate--tRNA ligase (498 aa).

Residues 11–21 (PSPTGHLHIGN) carry the 'HIGH' region motif. The 'KMSKS' region signature appears at 260-264 (KLSKR). Lys-263 is a binding site for ATP.

It belongs to the class-I aminoacyl-tRNA synthetase family. Glutamate--tRNA ligase type 1 subfamily. In terms of assembly, monomer.

It localises to the cytoplasm. The catalysed reaction is tRNA(Glu) + L-glutamate + ATP = L-glutamyl-tRNA(Glu) + AMP + diphosphate. Its function is as follows. Catalyzes the attachment of glutamate to tRNA(Glu) in a two-step reaction: glutamate is first activated by ATP to form Glu-AMP and then transferred to the acceptor end of tRNA(Glu). This Leuconostoc citreum (strain KM20) protein is Glutamate--tRNA ligase.